Reading from the N-terminus, the 159-residue chain is MKAIFAGSFDPPTFGHLDLVLRARSLFAEVHVLVAVNVQKRYLLSECERVDLMRQVLGDRPGVYVFPWRSLVVTYARDVGARVLVRGVRNATDFCQEFDLAWVHRALDAGLETVFLAAKPCYAALRSSMVREVASFGGDVSTFVPRVVARLLQEKFTQA.

Residue Ser-8 coordinates substrate. Residues 8–9 (SF) and His-16 each bind ATP. Lys-40, Val-72, and Arg-86 together coordinate substrate. ATP is bound by residues 87 to 89 (GVR), Glu-97, and 122 to 128 (YAALRSS).

Belongs to the bacterial CoaD family. Homohexamer. The cofactor is Mg(2+).

It localises to the cytoplasm. It catalyses the reaction (R)-4'-phosphopantetheine + ATP + H(+) = 3'-dephospho-CoA + diphosphate. Its pathway is cofactor biosynthesis; coenzyme A biosynthesis; CoA from (R)-pantothenate: step 4/5. In terms of biological role, reversibly transfers an adenylyl group from ATP to 4'-phosphopantetheine, yielding dephospho-CoA (dPCoA) and pyrophosphate. This Treponema pallidum (strain Nichols) protein is Phosphopantetheine adenylyltransferase.